We begin with the raw amino-acid sequence, 708 residues long: Polyribonucleotide nucleotidyltransferase (708 aa).

2 residues coordinate Mg(2+): D486 and D492. A KH domain is found at 553-612 (PRIIKFKINPEKIRDVIGKGGAVIRALTEETGTTIDISDDGSVTIACVSSEGGEQARKRI). Residues 622–690 (GRIYEGTVLK…EKGRLRLSMK (69 aa)) enclose the S1 motif domain.

This sequence belongs to the polyribonucleotide nucleotidyltransferase family. Mg(2+) serves as cofactor.

It is found in the cytoplasm. It carries out the reaction RNA(n+1) + phosphate = RNA(n) + a ribonucleoside 5'-diphosphate. Its function is as follows. Involved in mRNA degradation. Catalyzes the phosphorolysis of single-stranded polyribonucleotides processively in the 3'- to 5'-direction. This is Polyribonucleotide nucleotidyltransferase from Nitrosomonas europaea (strain ATCC 19718 / CIP 103999 / KCTC 2705 / NBRC 14298).